The chain runs to 528 residues: MDAQIKNEIVELTKAMLETFTKEYIKAYTIQITKKAIKDAKAIPSPYLLEPRPRDHDKSDVFSGYLVKLGAIRKNWLKRHFVVRYDYSIDYFVDDKHTNKKGTINLCGYSVNDDPNKSGLDRILKIAEKMGVDTSSIPKPAQLPPFTIELYHYSRRCYYIQCANEEEFKEWIEIFKTCCRRSHGFKNKDPCHIAAFGIAVRNTRWSLGRWGWFGYGGNENQILSDIILDEIEYDILGRALSKLPNAPWFIRNYLRNKMMTVIEGMVSSAVAPAWTGLSKTVEELRPTIEPRIKNQVDPIAQAQTNIINKMRESMMSQIKPAMEEHVNKHLKKIIGEIRTPIENGFDESLKIWNEKTNAYNGNGSTESFSSYRSYPNSYWTMYPAKDKISPLYSIVEEYRPIFRDYSSYFICYDIKESINNMAYDGAYTLEKTVTQDQVDVASAKNQTHSKYQHDVILGTNMQLKFVVREMVKPTLCKIINPLTKPLLNTLSSSIPSAIGDFIDINELYNQLVDDILNDSTQVVIDELN.

Residues serine 59–arginine 180 form the PH domain.

This is PH domain-containing protein DDB_G0267786 from Dictyostelium discoideum (Social amoeba).